A 133-amino-acid polypeptide reads, in one-letter code: Protein FwdD (133 aa).

The polypeptide is Protein FwdD (fwdD) (Methanocaldococcus jannaschii (strain ATCC 43067 / DSM 2661 / JAL-1 / JCM 10045 / NBRC 100440) (Methanococcus jannaschii)).